The chain runs to 87 residues: Envelope glycoprotein N (87 aa).

The signal sequence occupies residues 1-24; that stretch reads MGSITASFILITMQILFFCEDSSG. The Virion surface segment spans residues 25–48; sequence EPNFAERNFWHASCSARGVYIDGS. The helical transmembrane segment at 49–69 threads the bilayer; it reads MITTLFFYASLLGVCVALISL. Over 70–87 the chain is Intravirion; the sequence is AYHACFRLFTRSVLRSTW.

The protein belongs to the herpesviridae glycoprotein N family. As to quaternary structure, interacts (via N-terminus) with gM (via N-terminus). The gM-gN heterodimer forms the gCII complex.

It localises to the virion membrane. It is found in the host membrane. Its subcellular location is the host Golgi apparatus. The protein localises to the host trans-Golgi network. Its function is as follows. Envelope glycoprotein necessary for proper maturation of gM and modulation of its membrane fusion activity. Also plays a critical role in virion morphogenesis. The polypeptide is Envelope glycoprotein N (Varicella-zoster virus (strain Dumas) (HHV-3)).